The chain runs to 186 residues: tRNA (cytidine(56)-2'-O)-methyltransferase (186 aa).

S-adenosyl-L-methionine contacts are provided by residues Leu-84 and 110–114 (GAEKV).

The protein belongs to the aTrm56 family. As to quaternary structure, homodimer.

The protein localises to the cytoplasm. The enzyme catalyses cytidine(56) in tRNA + S-adenosyl-L-methionine = 2'-O-methylcytidine(56) in tRNA + S-adenosyl-L-homocysteine + H(+). Its function is as follows. Specifically catalyzes the AdoMet-dependent 2'-O-ribose methylation of cytidine at position 56 in tRNAs. The polypeptide is tRNA (cytidine(56)-2'-O)-methyltransferase (Staphylothermus marinus (strain ATCC 43588 / DSM 3639 / JCM 9404 / F1)).